Consider the following 86-residue polypeptide: Large ribosomal subunit protein bL31B (86 aa).

Belongs to the bacterial ribosomal protein bL31 family. Type B subfamily. Part of the 50S ribosomal subunit.

This is Large ribosomal subunit protein bL31B from Cupriavidus metallidurans (strain ATCC 43123 / DSM 2839 / NBRC 102507 / CH34) (Ralstonia metallidurans).